Reading from the N-terminus, the 356-residue chain is Mitogen-activated protein kinase PMK11 (356 aa).

The 289-residue stretch at 24–312 (YDIQDVVGEG…VEEALKHPYL (289 aa)) folds into the Protein kinase domain. ATP-binding positions include 30–38 (VGEGAYGVV) and Lys53.

This sequence belongs to the protein kinase superfamily. CMGC Ser/Thr protein kinase family. MAP kinase subfamily. Mg(2+) serves as cofactor. Phosphorylated by MST7.

It catalyses the reaction L-seryl-[protein] + ATP = O-phospho-L-seryl-[protein] + ADP + H(+). The enzyme catalyses L-threonyl-[protein] + ATP = O-phospho-L-threonyl-[protein] + ADP + H(+). Its function is as follows. Mitogen-activated protein kinase; part of the MST11-MST7-PMK1 MAP kinase (MAPK) cascade that is essential for appressorium formation, penetration and invasive growth. Central regulator of appressorium development that acts downstream of the cAMP signal. The MST11-MST7-PMK1 MAP kinase cascade transduces signals from the cell surface sensors MDB2 and SHO1 that recognize various surface signals such as surface hydrophobicity, cutin monomers, and rice leaf waxes. Regulates expression of secreted fungal effector proteins implicated of host immune defenses, preventing reactive oxygen species generation and excessive callose deposition at plasmodesmata. Furthermore, controls the hyphal constriction required for fungal growth from one rice cell to the neighboring cell, enabling host tissue colonization and blast disease. Targets downstream of the PMK1-MAPK pathway include transcription factor MST12 and pathogenicity-related genes GAS1 and GAS2, both of which are expressed during appressorium formation, even if regulation of MST12 is not associated with expression of GAS1 or GAS2. This Pyricularia oryzae (strain 70-15 / ATCC MYA-4617 / FGSC 8958) (Rice blast fungus) protein is Mitogen-activated protein kinase PMK11.